The chain runs to 211 residues: Scoloptoxin SSD43 (211 aa).

Residues 1–20 form the signal peptide; the sequence is MNFVIYGVIVVLTSQLYVDG.

Post-translationally, contains 3 disulfide bonds. As to expression, expressed by the venom gland.

The protein resides in the secreted. Functionally, shows trypsin inhibiting activity. The protein is highly thermally stable, since its incubation in boiling water during 10 minutes does not reduce its activity. This is Scoloptoxin SSD43 from Scolopendra dehaani (Thai centipede).